The sequence spans 357 residues: NADH-quinone oxidoreductase subunit H (357 aa).

The next 8 membrane-spanning stretches (helical) occupy residues 20–40, 92–112, 127–147, 165–185, 206–226, 268–288, 294–314, and 329–349; these read WLVV…ILCV, ILFI…WAVV, LLYV…AGWA, VSYE…SGSL, FLSW…ISAV, ILLS…PIDI, IPGW…FIWF, and LGWK…AIWM.

This sequence belongs to the complex I subunit 1 family. As to quaternary structure, NDH-1 is composed of 14 different subunits. Subunits NuoA, H, J, K, L, M, N constitute the membrane sector of the complex.

The protein resides in the cell inner membrane. It carries out the reaction a quinone + NADH + 5 H(+)(in) = a quinol + NAD(+) + 4 H(+)(out). NDH-1 shuttles electrons from NADH, via FMN and iron-sulfur (Fe-S) centers, to quinones in the respiratory chain. The immediate electron acceptor for the enzyme in this species is believed to be ubiquinone. Couples the redox reaction to proton translocation (for every two electrons transferred, four hydrogen ions are translocated across the cytoplasmic membrane), and thus conserves the redox energy in a proton gradient. This subunit may bind ubiquinone. In Bordetella avium (strain 197N), this protein is NADH-quinone oxidoreductase subunit H.